The chain runs to 565 residues: Proline--tRNA ligase (565 aa).

The protein belongs to the class-II aminoacyl-tRNA synthetase family. ProS type 1 subfamily. In terms of assembly, homodimer.

The protein resides in the cytoplasm. The catalysed reaction is tRNA(Pro) + L-proline + ATP = L-prolyl-tRNA(Pro) + AMP + diphosphate. Functionally, catalyzes the attachment of proline to tRNA(Pro) in a two-step reaction: proline is first activated by ATP to form Pro-AMP and then transferred to the acceptor end of tRNA(Pro). As ProRS can inadvertently accommodate and process non-cognate amino acids such as alanine and cysteine, to avoid such errors it has two additional distinct editing activities against alanine. One activity is designated as 'pretransfer' editing and involves the tRNA(Pro)-independent hydrolysis of activated Ala-AMP. The other activity is designated 'posttransfer' editing and involves deacylation of mischarged Ala-tRNA(Pro). The misacylated Cys-tRNA(Pro) is not edited by ProRS. The protein is Proline--tRNA ligase of Francisella tularensis subsp. tularensis (strain WY96-3418).